Here is a 543-residue protein sequence, read N- to C-terminus: CTP synthase (543 aa).

An amidoligase domain region spans residues 1 to 265 (MARYIFITGG…DDEVLAAFGI (265 aa)). S13 is a binding site for CTP. S13 is a binding site for UTP. 14-19 (SLGKGL) lines the ATP pocket. An L-glutamine-binding site is contributed by Y54. Residue D71 coordinates ATP. Residues D71 and E139 each contribute to the Mg(2+) site. Residues 146-148 (DIE), 186-191 (KTKPTQ), and K222 contribute to the CTP site. UTP is bound by residues 186 to 191 (KTKPTQ) and K222. 238–240 (RDV) serves as a coordination point for ATP. The region spanning 291–542 (TIAIVGKYTG…IQAAMVQSRL (252 aa)) is the Glutamine amidotransferase type-1 domain. G353 is a binding site for L-glutamine. The active-site Nucleophile; for glutamine hydrolysis is C380. L-glutamine-binding positions include 381–384 (FGMQ), E404, and R470. Residues H515 and E517 contribute to the active site.

It belongs to the CTP synthase family. As to quaternary structure, homotetramer.

It carries out the reaction UTP + L-glutamine + ATP + H2O = CTP + L-glutamate + ADP + phosphate + 2 H(+). The enzyme catalyses L-glutamine + H2O = L-glutamate + NH4(+). The catalysed reaction is UTP + NH4(+) + ATP = CTP + ADP + phosphate + 2 H(+). It participates in pyrimidine metabolism; CTP biosynthesis via de novo pathway; CTP from UDP: step 2/2. Allosterically activated by GTP, when glutamine is the substrate; GTP has no effect on the reaction when ammonia is the substrate. The allosteric effector GTP functions by stabilizing the protein conformation that binds the tetrahedral intermediate(s) formed during glutamine hydrolysis. Inhibited by the product CTP, via allosteric rather than competitive inhibition. Catalyzes the ATP-dependent amination of UTP to CTP with either L-glutamine or ammonia as the source of nitrogen. Regulates intracellular CTP levels through interactions with the four ribonucleotide triphosphates. This Bradyrhizobium diazoefficiens (strain JCM 10833 / BCRC 13528 / IAM 13628 / NBRC 14792 / USDA 110) protein is CTP synthase.